The primary structure comprises 862 residues: Piwi-like protein 1 (862 aa).

Residues 1 to 13 (MTGRARARARGRA) show a composition bias toward basic residues. The disordered stretch occupies residues 1–48 (MTGRARARARGRARGQETVQHVGAAASQQPGYIPPRPQQSPTEGDLVG). Position 14 is an omega-N-methylarginine; by PRMT5; alternate (Arg14). Arg14 is subject to Symmetric dimethylarginine; by PRMT5; alternate. Arg49 is subject to Omega-N-methylarginine; by PRMT5. Omega-N-methylarginine; alternate is present on Arg53. Position 53 is a symmetric dimethylarginine; alternate (Arg53). The D-box motif lies at 218 to 225 (RRLLKIMN). The 114-residue stretch at 279–392 (TVLDFMFNLY…LIPELCYLTG (114 aa)) folds into the PAZ domain. The segment at 317-319 (TYR) is required for binding 2'-O-methylated 3'-end of piRNAs. An Omega-N-methylarginine; by PRMT5 modification is found at Arg371. The interval 480-616 (SKETRGAPLI…LQMNCKMGGE (137 aa)) is MID region. The Piwi domain occupies 556-848 (IVVCLLSSNR…LAFLVGQSIH (293 aa)). Residues Asp633, Glu671, Asp703, and His837 contribute to the active site.

Belongs to the argonaute family. Piwi subfamily. Interacts (via Piwi domain) with DICER1, suggesting that it forms ribonucleoprotein RISC complexes; this interaction is regulated by HSP90AB1 activity. Interacts with MAEL, KIF17, PABPC1, PRMT5 and WDR77. Interacts (when methylated on arginine residues) with TDRD1, TDRKH/TDRD2, RNF17/TDRD4, TDRD6, TDRD7 and TDRD9. Interacts with CLOCK. Interacts with MOV10L1. Interacts with ANAPC10; interaction oly takes place following piRNA-binding. Interacts with RNF8; leading to sequester RNF8 in the cytoplasm. Interacts with Tex19.1 and, probably, Tex19.2. The cofactor is Mg(2+). Ubiquitinated by the anaphase promoting complex/cyclosome (APC/C) in late spermatids, leading to its degradation. Ubiquitination only takes place following piRNA-binding in adult testis. Ubiquitination and degradation in late spermatogenesis by APC/C is probably required to release RNF8 from the cytoplasm and promote histone to protamine exchange by RNF8. In terms of processing, arginine methylation by PRMT5 is required for the interaction with Tudor domain-containing protein (TDRD1, TDRKH/TDRD2, RNF17/TDRD4, TDRD6, TDRD7 and TDRD9) and subsequent localization to the meiotic nuage, also named P granule. In terms of tissue distribution, expressed in brain. Expressed in testis, specifically in spermatocytes (at protein level). Only detected in germ lineage cells of adult testis. Expressed in male gonads 2 weeks after birth at the initiation of spermatogenesis, but not expressed in female gonads.

It is found in the cytoplasm. Its function is as follows. Endoribonuclease that plays a central role in postnatal germ cells by repressing transposable elements and preventing their mobilization, which is essential for the germline integrity. Acts via the piRNA metabolic process, which mediates the repression of transposable elements during meiosis by forming complexes composed of piRNAs and Piwi proteins and governs the methylation and subsequent repression of transposons. Directly binds methylated piRNAs, a class of 24 to 30 nucleotide RNAs that are generated by a Dicer-independent mechanism and are primarily derived from transposons and other repeated sequence elements. Strongly prefers a uridine in the first position of their guide (g1U preference, also named 1U-bias). Not involved in the piRNA amplification loop, also named ping-pong amplification cycle. Acts as an endoribonuclease that cleaves transposon messenger RNAs. Besides their function in transposable elements repression, piRNAs are probably involved in other processes during meiosis such as translation regulation. Probable component of some RISC complex, which mediates RNA cleavage and translational silencing. Also plays a role in the formation of chromatoid bodies and is required for some miRNAs stability. Required to sequester RNF8 in the cytoplasm until late spermatogenesis; RNF8 being released upon ubiquitination and degradation of PIWIL1. In Mus musculus (Mouse), this protein is Piwi-like protein 1.